We begin with the raw amino-acid sequence, 413 residues long: Serine hydroxymethyltransferase (413 aa).

Residues L119 and 123–125 (GHL) each bind (6S)-5,6,7,8-tetrahydrofolate. N6-(pyridoxal phosphate)lysine is present on K228. (6S)-5,6,7,8-tetrahydrofolate is bound at residue 351 to 353 (SPF).

The protein belongs to the SHMT family. Homodimer. Pyridoxal 5'-phosphate serves as cofactor.

Its subcellular location is the cytoplasm. It carries out the reaction (6R)-5,10-methylene-5,6,7,8-tetrahydrofolate + glycine + H2O = (6S)-5,6,7,8-tetrahydrofolate + L-serine. The protein operates within one-carbon metabolism; tetrahydrofolate interconversion. It functions in the pathway amino-acid biosynthesis; glycine biosynthesis; glycine from L-serine: step 1/1. Catalyzes the reversible interconversion of serine and glycine with tetrahydrofolate (THF) serving as the one-carbon carrier. This reaction serves as the major source of one-carbon groups required for the biosynthesis of purines, thymidylate, methionine, and other important biomolecules. Also exhibits THF-independent aldolase activity toward beta-hydroxyamino acids, producing glycine and aldehydes, via a retro-aldol mechanism. The sequence is that of Serine hydroxymethyltransferase from Clostridium botulinum (strain 657 / Type Ba4).